The sequence spans 222 residues: Phosphoenolpyruvate guanylyltransferase (222 aa).

Phosphoenolpyruvate-binding residues include Thr-134, Gly-150, and Ser-153.

Belongs to the CofC family.

The catalysed reaction is phosphoenolpyruvate + GTP + H(+) = enolpyruvoyl-2-diphospho-5'-guanosine + diphosphate. The protein operates within cofactor biosynthesis; coenzyme F420 biosynthesis. Functionally, guanylyltransferase that catalyzes the activation of phosphoenolpyruvate (PEP) as enolpyruvoyl-2-diphospho-5'-guanosine, via the condensation of PEP with GTP. It is involved in the biosynthesis of coenzyme F420, a hydride carrier cofactor. This Roseiflexus sp. (strain RS-1) protein is Phosphoenolpyruvate guanylyltransferase.